Consider the following 88-residue polypeptide: Cell division topological specificity factor (88 aa).

The protein belongs to the MinE family.

Prevents the cell division inhibition by proteins MinC and MinD at internal division sites while permitting inhibition at polar sites. This ensures cell division at the proper site by restricting the formation of a division septum at the midpoint of the long axis of the cell. This chain is Cell division topological specificity factor, found in Escherichia fergusonii (strain ATCC 35469 / DSM 13698 / CCUG 18766 / IAM 14443 / JCM 21226 / LMG 7866 / NBRC 102419 / NCTC 12128 / CDC 0568-73).